A 3707-amino-acid polypeptide reads, in one-letter code: CUB and sushi domain-containing protein 3 (3707 aa).

The interval 1–21 (MKGIRKGESRAKESKPWEPGK) is disordered. Over 1–42 (MKGIRKGESRAKESKPWEPGKRRCAKCGRLDFILMKKMGIKS) the chain is Cytoplasmic. Residues 43–63 (GFTFWNLVFLLTVSCVKGFIY) form a helical membrane-spanning segment. The Extracellular portion of the chain corresponds to 64–3630 (TCGGTLKGLN…NQPHGTNSSS (3567 aa)). Intrachain disulfides connect C65–C91, C178–C218, C204–C235, and C241–C267. The CUB 1 domain maps to 65 to 173 (CGGTLKGLNG…HGFKVYYEEL (109 aa)). 2 N-linked (GlcNAc...) asparagine glycosylation sites follow: N73 and N90. One can recognise a Sushi 1 domain in the interval 176 to 237 (SSCGNPGVPP…WDFPVPICRA (62 aa)). A CUB 2 domain is found at 241–345 (CGGTMRGSSG…RGFSAPYQGS (105 aa)). 2 N-linked (GlcNAc...) asparagine glycosylation sites follow: N361 and N409. The segment at 394-435 (QRVQVTSLRNSGLDPNTSKDGLSPHPADTQSTRRRPRHAEQI) is disordered. The span at 396–413 (VQVTSLRNSGLDPNTSKD) shows a compositional bias: polar residues. The Sushi 2 domain maps to 484–545 (NLCPDPGEPE…WSDHRPVCKV (62 aa)). Disulfide bonds link C486-C526, C512-C543, C548-C574, C664-C704, C690-C717, and C721-C747. The CUB 3 domain occupies 548–659 (CGSNLQGPSG…VGFKVNYKEI (112 aa)). The region spanning 662 to 719 (ESCGDPGTPLYGIREGDGFSNRDVLRFECQFGFELIGEKSIVCQENNQWSANIPICIF) is the Sushi 3 domain. One can recognise a CUB 4 domain in the interval 721 to 829 (CLSNFTAPMG…RGFNITYNTF (109 aa)). Residues N724 and N823 are each glycosylated (N-linked (GlcNAc...) asparagine). Positions 832–893 (NECPDPGIPI…WSGLIPKCGA (62 aa)) constitute a Sushi 4 domain. Intrachain disulfides connect C834/C875, C860/C891, and C895/C921. A CUB 5 domain is found at 895–1003 (CGGHFSAPSG…NGFKIHYESV (109 aa)). N-linked (GlcNAc...) asparagine glycosylation occurs at N966. The region spanning 1008-1065 (YSCLDPGIPVHGRRYGHDFSIGSTVSFSCDSGYRLSHEEPLLCEKNHWWSHPLPTCDA) is the Sushi 5 domain. Cystine bridges form between C1010-C1050, C1036-C1063, and C1067-C1093. The region spanning 1067–1177 (CGGDVRGPSG…EGFNITFSEY (111 aa)) is the CUB 6 domain. N1092, N1126, and N1171 each carry an N-linked (GlcNAc...) asparagine glycan. The Sushi 6 domain occupies 1180-1239 (EPCEDPGIPQYGSRIGFNFGIGDTLTFSCSSGYRLEGTSEIICLGGGRRVWSAPLPRCVA). 3 disulfide bridges follow: C1182–C1222, C1208–C1237, and C1241–C1267. In terms of domain architecture, CUB 7 spans 1241-1349 (CGASATNNEG…EGFQLVYTSF (109 aa)). N-linked (GlcNAc...) asparagine glycosylation occurs at N1280. The Sushi 7 domain maps to 1352-1412 (SHCEDPGIPQ…WDYPLPSCIA (61 aa)). 12 disulfide bridges follow: C1354–C1395, C1381–C1410, C1414–C1441, C1528–C1568, C1554–C1584, C1588–C1614, C1701–C1741, C1727–C1758, C1762–C1788, C1878–C1918, C1904–C1935, and C1939–C1965. A CUB 8 domain is found at 1414 to 1523 (CGGRFKGESS…SGFAIQFSSS (110 aa)). The region spanning 1526–1586 (TACRDPGVPM…WQPSPPVCIA (61 aa)) is the Sushi 8 domain. N-linked (GlcNAc...) asparagine glycosylation is present at N1536. A CUB 9 domain is found at 1588–1696 (CGGNLTGSSG…TGFHLEYKAK (109 aa)). 2 N-linked (GlcNAc...) asparagine glycosylation sites follow: N1591 and N1709. Residues 1699–1760 (ESCFDPGNIM…WNRALPSCHA (62 aa)) enclose the Sushi 9 domain. A CUB 10 domain is found at 1762-1870 (CGSRSTGSEG…KGFHFVYQAV (109 aa)). A glycan (N-linked (GlcNAc...) asparagine) is linked at N1781. Residues 1876-1937 (TQCSSVPEPR…WNDSLPTCIV (62 aa)) enclose the Sushi 10 domain. N1929 carries N-linked (GlcNAc...) asparagine glycosylation. The CUB 11 domain maps to 1939–2047 (CGGILTKRKG…AGFHLEYTAI (109 aa)). Residue N2019 is glycosylated (N-linked (GlcNAc...) asparagine). One can recognise a Sushi 11 domain in the interval 2050–2109 (DSCPEPQTPSSGIKIGDRYMVGDVVSFQCDQGYSLQGHSHITCMPGPVRRWNYPIPICLA). Cystine bridges form between C2052-C2092, C2078-C2107, and C2111-C2137. The 109-residue stretch at 2111 to 2219 (CGGAMSDFSG…QGFHIVYQAY (109 aa)) folds into the CUB 12 domain. N2155 carries an N-linked (GlcNAc...) asparagine glycan. The Sushi 12 domain occupies 2222–2281 (QSCPDPRPFRNGFVIGNDFTVGQTISFECFPGYTLIGNSALTCLHGVSRNWNHPLPRCEA). 3 cysteine pairs are disulfide-bonded: C2224–C2264, C2250–C2279, and C2283–C2309. Residues 2283-2394 (CGGNITAMNG…LSYHAYQLRV (112 aa)) enclose the CUB 13 domain. 3 N-linked (GlcNAc...) asparagine glycosylation sites follow: N2286, N2291, and N2324. The 62-residue stretch at 2393–2454 (RVCQPPPPVP…MDGAPPVCQV (62 aa)) folds into the Sushi 13 domain. Intrachain disulfides connect C2395–C2437, C2423–C2452, and C2456–C2484. Positions 2456–2567 (CPANELRLDS…KGFRIRYIAF (112 aa)) constitute a CUB 14 domain. Residues N2495 and N2537 are each glycosylated (N-linked (GlcNAc...) asparagine). Sushi domains lie at 2567-2629 (FYCS…ACQA), 2630-2691 (ISCG…RCVV), 2692-2756 (VTCP…YCQI), 2757-2814 (ISCG…RCLA), 2815-2872 (GHCG…SCVP), 2873-2930 (VSCG…MCKV), 2931-2992 (VNCS…ECIM), 2993-3050 (IDCG…HCSG), 3054-3111 (GTCG…ECKA), 3112-3170 (VQCG…NCTI), 3171-3230 (ISCG…TCRA), 3231-3288 (VTCP…QCLP), 3289-3346 (KFCG…HCIE), 3350-3408 (TSCE…ECIP), and 3409-3468 (HSCK…ICEA). Cystine bridges form between C2569/C2610, C2596/C2627, C2632/C2674, C2658/C2689, C2694/C2739, C2725/C2754, C2759/C2799, C2785/C2812, C2817/C2857, C2843/C2870, C2875/C2915, and C2901/C2928. N2711 and N2742 each carry an N-linked (GlcNAc...) asparagine glycan. An N-linked (GlcNAc...) asparagine glycan is attached at N2862. Residues N2932 and N2952 are each glycosylated (N-linked (GlcNAc...) asparagine). Intrachain disulfides connect C2933–C2977, C2963–C2990, C2995–C3035, C3021–C3048, C3056–C3096, C3082–C3109, C3114–C3155, C3141–C3168, C3173–C3215, C3199–C3228, C3233–C3273, C3259–C3286, C3291–C3331, C3317–C3344, C3352–C3393, C3379–C3406, C3411–C3453, and C3438–C3466. An N-linked (GlcNAc...) asparagine glycan is attached at N3099. N-linked (GlcNAc...) asparagine glycans are attached at residues N3158, N3167, N3194, N3208, and N3218. An N-linked (GlcNAc...) asparagine glycan is attached at N3276. N3364 is a glycosylation site (N-linked (GlcNAc...) asparagine). N-linked (GlcNAc...) asparagine glycosylation is found at N3522, N3529, N3612, N3618, and N3627. The helical transmembrane segment at 3631 to 3651 (VAIAILVPFFALIFAGFGFYL) threads the bilayer. Residues 3652 to 3707 (YKQRTAPKTQYTGCSVHENNNGQAAFENPMYDTNAKSVEGKAVRFDPNLNTVCTMV) are Cytoplasmic-facing.

This sequence belongs to the CSMD family. In terms of tissue distribution, weakly expressed in most tissues, except in brain. Expressed at intermediate level in brain, including cerebellum, substantia nigra, thalamus, spinal cord, hippocampus and fetal brain. Also expressed in testis.

The protein localises to the cell membrane. In terms of biological role, involved in dendrite development. This chain is CUB and sushi domain-containing protein 3 (CSMD3), found in Homo sapiens (Human).